Consider the following 237-residue polypeptide: Bax inhibitor 1 (237 aa).

The Cytoplasmic portion of the chain corresponds to Met-1 to Lys-29. A Glycyl lysine isopeptide (Lys-Gly) (interchain with G-Cter in ubiquitin) cross-link involves residue Lys-7. A helical transmembrane segment spans residues Val-30–Val-50. The Lumenal portion of the chain corresponds to Thr-51–Arg-52. The chain crosses the membrane as a helical span at residues Phe-53–Ala-73. The Cytoplasmic segment spans residues Thr-74–Gly-86. A helical transmembrane segment spans residues Leu-87–Ile-107. The Lumenal portion of the chain corresponds to Ala-108–Ser-112. A helical membrane pass occupies residues Ile-113–Leu-133. Topologically, residues Tyr-134–Ser-139 are cytoplasmic. A helical transmembrane segment spans residues Tyr-140–Gly-160. At Asn-161 to Ser-166 the chain is on the lumenal side. A helical membrane pass occupies residues Ile-167 to Phe-187. The Cytoplasmic segment spans residues Asp-188–His-206. Residues Cys-207–Phe-227 constitute an intramembrane region (helical). Residues Asn-228–Lys-237 lie on the Cytoplasmic side of the membrane.

Belongs to the BI1 family. As to quaternary structure, interacts with BCL2 and BCL2L1. Interacts with ERN1. Ubiquitinated by BFAR, leading to proteasomal degradation. Highly abundant in adult testis.

The protein localises to the endoplasmic reticulum membrane. Endoplasmic reticulum (ER)-resident protein that confers cellular protection as an anti-apoptotic protein by limiting multiple stress-inducing pathways surrounding the endoplasmic reticulum and mitochondria. Inhibits the activities of the key sensor for the endoplasmic reticulum unfolded protein response IRE1alpha/ERN1 both directly and by blocking BAX/BAK binding. Modulates ER calcium homeostasis by acting as a calcium-leak channel. Negatively regulates autophagy and autophagosome formation, especially during periods of nutrient deprivation, and reduces cell survival during starvation. This chain is Bax inhibitor 1 (Tmbim6), found in Rattus norvegicus (Rat).